Reading from the N-terminus, the 554-residue chain is (Z)-gamma-bisabolene synthase 2 (554 aa).

Residues aspartate 306, aspartate 310, aspartate 450, and aspartate 458 each contribute to the Mg(2+) site. The DDXXD motif motif lies at 306–310; the sequence is DDACD.

The protein belongs to the terpene synthase family. Tpsa subfamily. The cofactor is Mg(2+). Mn(2+) serves as cofactor. Predominantly expressed in roots. Expressed in the cortex and the sub-epidermal layers of roots. Also detected in leaf hydathodes and flower stigmata.

The protein resides in the cytoplasm. It catalyses the reaction (2E,6E)-farnesyl diphosphate = (Z)-gamma-bisabolene + diphosphate. It participates in secondary metabolite biosynthesis; terpenoid biosynthesis. Its function is as follows. Involved in sesquiterpene (C15) biosynthesis. The major product is (Z)-gamma-bisabolene with minor amounts of (E)-nerolidol and alpha-bisabolol. This is (Z)-gamma-bisabolene synthase 2 (TPS13) from Arabidopsis thaliana (Mouse-ear cress).